We begin with the raw amino-acid sequence, 129 residues long: Fluoride-specific ion channel FluC (129 aa).

Helical transmembrane passes span 4–24 (VLIV…LGEW), 30–50 (GFPT…GWLL), 63–83 (WSLL…TFSV), and 95–115 (IVAS…AYIG). The Na(+) site is built by Gly-73 and Thr-76.

The protein belongs to the fluoride channel Fluc/FEX (TC 1.A.43) family.

It is found in the cell membrane. It carries out the reaction fluoride(in) = fluoride(out). With respect to regulation, na(+) is not transported, but it plays an essential structural role and its presence is essential for fluoride channel function. Its function is as follows. Fluoride-specific ion channel. Important for reducing fluoride concentration in the cell, thus reducing its toxicity. This is Fluoride-specific ion channel FluC from Oceanobacillus iheyensis (strain DSM 14371 / CIP 107618 / JCM 11309 / KCTC 3954 / HTE831).